The following is a 125-amino-acid chain: Large ribosomal subunit protein bL12 (125 aa).

Belongs to the bacterial ribosomal protein bL12 family. Homodimer. Part of the ribosomal stalk of the 50S ribosomal subunit. Forms a multimeric L10(L12)X complex, where L10 forms an elongated spine to which 2 to 4 L12 dimers bind in a sequential fashion. Binds GTP-bound translation factors.

Forms part of the ribosomal stalk which helps the ribosome interact with GTP-bound translation factors. Is thus essential for accurate translation. This Polaromonas naphthalenivorans (strain CJ2) protein is Large ribosomal subunit protein bL12.